A 416-amino-acid polypeptide reads, in one-letter code: Glutamyl-tRNA reductase (416 aa).

Residues 49–52 (TCNR), Ser-105, 110–112 (EPQ), and Gln-116 contribute to the substrate site. Residue Cys-50 is the Nucleophile of the active site. 185 to 190 (GAGETI) provides a ligand contact to NADP(+).

The protein belongs to the glutamyl-tRNA reductase family. In terms of assembly, homodimer.

It carries out the reaction (S)-4-amino-5-oxopentanoate + tRNA(Glu) + NADP(+) = L-glutamyl-tRNA(Glu) + NADPH + H(+). Its pathway is porphyrin-containing compound metabolism; protoporphyrin-IX biosynthesis; 5-aminolevulinate from L-glutamyl-tRNA(Glu): step 1/2. Functionally, catalyzes the NADPH-dependent reduction of glutamyl-tRNA(Glu) to glutamate 1-semialdehyde (GSA). This chain is Glutamyl-tRNA reductase, found in Shewanella halifaxensis (strain HAW-EB4).